The following is a 189-amino-acid chain: MIVILNNGGQYVHRIQRSLKYLDVPAKIIPNSTTLEEIIADSEIKGIILSGGPDITKATNCENIALNSELPVLGICLGHQLISKAYGGEVSRADSEEYASIKIYVKEENDLFNGVPSEFTAWASHMDEVKVIPDCFEVLAYSDICGIESIKHKEKSIYGVQFHPEVSHTEYGDVILKNFCKKCGFEFEE.

The Glutamine amidotransferase type-1 domain occupies Met-1–Glu-189. The active-site Nucleophile is Cys-76. Catalysis depends on residues His-163 and Glu-165.

Heterodimer composed of a glutamine amidotransferase subunit (A) and a GMP-binding subunit (B).

It catalyses the reaction XMP + L-glutamine + ATP + H2O = GMP + L-glutamate + AMP + diphosphate + 2 H(+). It participates in purine metabolism; GMP biosynthesis; GMP from XMP (L-Gln route): step 1/1. In terms of biological role, catalyzes the synthesis of GMP from XMP. The sequence is that of GMP synthase [glutamine-hydrolyzing] subunit A from Methanococcus maripaludis (strain C5 / ATCC BAA-1333).